The following is a 619-amino-acid chain: Sodium-dependent dopamine transporter (619 aa).

At 1-56 (MSKSKCSVGPMSSVVAPAKEPNAVGPREVELILVKEQNGVQLTNSTLINPPQTPVE) the chain is on the cytoplasmic side. Residues 57–95 (VQERETWSKKIDFLLSVIGFAVDLANVWRFPYLCYKNGG) form a discontinuously helical membrane-spanning segment. Residues glycine 75, alanine 77, valine 78, aspartate 79, and asparagine 82 each coordinate Na(+). Aspartate 79 contacts dopamine. Helical transmembrane passes span 96–127 (GAFL…NREG) and 128–171 (AAGV…FSSF). Positions 149 and 153 each coordinate dopamine. Topologically, residues 172–235 (TMDLPWIHCN…SRGIDDLGPP (64 aa)) are extracellular. Cysteines 180 and 189 form a disulfide. 4 N-linked (GlcNAc...) asparagine glycosylation sites follow: asparagine 181, asparagine 188, asparagine 196, and asparagine 204. 2 helical membrane passes run 236 to 255 (RWQL…FSLW) and 256 to 286 (KGVK…GVTL). At 287–305 (PGAMDGIRAYLSVDFYRLC) the chain is on the extracellular side. The discontinuously helical transmembrane segment at 306-334 (EASVWIDAATQVCFSLGVGFGVLIAFSSY) threads the bilayer. Glutamine 316 lines the chloride pocket. Phenylalanine 319 is a binding site for dopamine. Na(+) contacts are provided by serine 320 and asparagine 352. Position 320 (serine 320) interacts with chloride. Residues 335–375 (NKFTNNCYRDAIITTSINSLTSFSSGFVVFSFLGYMAQKHN) form a helical membrane-spanning segment. Serine 356 provides a ligand contact to chloride. At 376–399 (VPIRDVATDGPGLIFIIYPEAIAT) the chain is on the extracellular side. Helical transmembrane passes span 400–441 (LPLS…QLLH), 442–465 (RHRE…CVTN), and 466–498 (GGIY…AWFY). Residues leucine 417, aspartate 420, and serine 421 each contribute to the Na(+) site. Residues serine 421 and alanine 422 each coordinate dopamine. The Cytoplasmic segment spans residues 499–515 (GVQQFSDDIKQMTGQRP). Residues 516–541 (NLYWRLCWKLVSPCFLLYVVVVSIVT) traverse the membrane as a helical segment. Residues 542–552 (FRPPHYGAYIF) lie on the Extracellular side of the membrane. Residues 553 to 582 (PDWANALGWIIATSSMAMVPIYATYKFCSL) traverse the membrane as a helical segment. The segment at 560–589 (GWIIATSSMAMVPIYATYKFCSLPGSFREK) is interaction with TGFB1I1. At 583–619 (PGSFREKLAYAITPEKDRQLVDRGEVRQFTLRHWLLV) the chain is on the cytoplasmic side.

The protein belongs to the sodium:neurotransmitter symporter (SNF) (TC 2.A.22) family. SLC6A3 subfamily. As to quaternary structure, monomer. Homooligomer; disulfide-linked. Interacts with PRKCABP and TGFB1I1. Interacts (via N-terminus) with SYNGR3 (via N-terminus). Interacts with SLC18A2. Interacts with TOR1A (ATP-bound); TOR1A regulates SLC6A3 subcellular location. Interacts with alpha-synuclein/SNCA. Interacts with SEPTIN4. As to expression, found in the substantia nigra and ventral tegmental dopamine neurons, in fibers of the medial forebrain bundle ascending into the striatum, and within dense fiber networks and varicosities in the dorsal and ventral striatum (at protein level). Lower expression in the cortex (at protein level). Absent from the corpus callosum. Expressed throughout the retina at postnatal day 8.

Its subcellular location is the cell membrane. It is found in the cell projection. The protein resides in the neuron projection. It localises to the axon. It carries out the reaction dopamine(out) + chloride(out) + Na(+)(out) = dopamine(in) + chloride(in) + Na(+)(in). It catalyses the reaction (R)-noradrenaline(out) + chloride(out) + Na(+)(out) = (R)-noradrenaline(in) + chloride(in) + Na(+)(in). The catalysed reaction is dopamine(out) + chloride(out) + 2 Na(+)(out) = dopamine(in) + chloride(in) + 2 Na(+)(in). Its activity is regulated as follows. Inhibited by amphetamine, bupropion, cocaine and ritalin. Inhibited by zinc ions. Functionally, mediates sodium- and chloride-dependent transport of dopamine. Also mediates sodium- and chloride-dependent transport of norepinephrine (also known as noradrenaline). Regulator of light-dependent retinal hyaloid vessel regression, downstream of OPN5 signaling. The protein is Sodium-dependent dopamine transporter (Slc6a3) of Mus musculus (Mouse).